A 340-amino-acid polypeptide reads, in one-letter code: Diacylglycerol acyltransferase/mycolyltransferase Ag85C (340 aa).

The N-terminal stretch at 1–45 is a signal peptide; it reads MTFFEQVRRLRSAATTLPRRLAIAAMGAVLVYGLVGTFGGPATAG. A substrate-binding site is contributed by 86-87; sequence LR. The segment at 102 to 112 is fibronectin-binding; it reads FEEYYQSGLSV. The substrate site is built by Ser170 and Asn198. The active-site Nucleophile is the Ser170. Glu274 is an active-site residue. Substrate contacts are provided by residues 276-279 and 306-308; these read LTLR and HSW. His306 is an active-site residue.

It belongs to the mycobacterial A85 antigen family. Homodimer.

It localises to the secreted. It carries out the reaction an acyl-CoA + a 1,2-diacyl-sn-glycerol = a triacyl-sn-glycerol + CoA. The enzyme catalyses 2 alpha,alpha'-trehalose 6-mycolate = alpha,alpha'-trehalose 6,6'-bismycolate + alpha,alpha-trehalose. Functionally, the antigen 85 proteins (FbpA, FbpB, FbpC) are responsible for the high affinity of mycobacteria to fibronectin, a large adhesive glycoprotein, which facilitates the attachment of M.tuberculosis to murine alveolar macrophages (AMs). They also help to maintain the integrity of the cell wall by catalyzing the transfer of mycolic acids to cell wall arabinogalactan and through the synthesis of alpha,alpha-trehalose dimycolate (TDM, cord factor). They catalyze the transfer of a mycoloyl residue from one molecule of alpha,alpha-trehalose monomycolate (TMM) to another TMM, leading to the formation of TDM. The chain is Diacylglycerol acyltransferase/mycolyltransferase Ag85C (fbpC) from Mycobacterium bovis (strain ATCC BAA-935 / AF2122/97).